The chain runs to 443 residues: DNA primase DnaG (443 aa).

The Toprim domain occupies 169–243; sequence DSIIIVEGRA…DIDYVSRAPY (75 aa). Residues Glu-175, Asp-217, and Asp-219 each coordinate Mg(2+).

Belongs to the archaeal DnaG primase family. As to quaternary structure, forms a ternary complex with MCM helicase and DNA. Mg(2+) serves as cofactor.

It carries out the reaction ssDNA + n NTP = ssDNA/pppN(pN)n-1 hybrid + (n-1) diphosphate.. In terms of biological role, RNA polymerase that catalyzes the synthesis of short RNA molecules used as primers for DNA polymerase during DNA replication. The sequence is that of DNA primase DnaG from Methanococcus vannielii (strain ATCC 35089 / DSM 1224 / JCM 13029 / OCM 148 / SB).